The sequence spans 378 residues: tRNA-specific 2-thiouridylase MnmA (378 aa).

ATP is bound by residues 12-19 and M38; that span reads GLSGGVDS. The tract at residues 98 to 100 is interaction with target base in tRNA; sequence NPD. The active-site Nucleophile is the C103. C103 and C201 are oxidised to a cystine. G127 is an ATP binding site. The interval 151-153 is interaction with tRNA; that stretch reads KDQ. The Cysteine persulfide intermediate role is filled by C201. The segment at 319–320 is interaction with tRNA; sequence RY.

It belongs to the MnmA/TRMU family.

It localises to the cytoplasm. The catalysed reaction is S-sulfanyl-L-cysteinyl-[protein] + uridine(34) in tRNA + AH2 + ATP = 2-thiouridine(34) in tRNA + L-cysteinyl-[protein] + A + AMP + diphosphate + H(+). In terms of biological role, catalyzes the 2-thiolation of uridine at the wobble position (U34) of tRNA, leading to the formation of s(2)U34. The polypeptide is tRNA-specific 2-thiouridylase MnmA (Paracidovorax citrulli (strain AAC00-1) (Acidovorax citrulli)).